The following is a 104-amino-acid chain: Large ribosomal subunit protein bL21 (104 aa).

The segment covering Gln81–Arg90 has biased composition (basic residues). Residues Gln81–Gly104 are disordered.

It belongs to the bacterial ribosomal protein bL21 family. In terms of assembly, part of the 50S ribosomal subunit. Contacts protein L20.

Functionally, this protein binds to 23S rRNA in the presence of protein L20. This chain is Large ribosomal subunit protein bL21, found in Halorhodospira halophila (strain DSM 244 / SL1) (Ectothiorhodospira halophila (strain DSM 244 / SL1)).